Reading from the N-terminus, the 2542-residue chain is Ankyrin repeat and KH domain-containing protein 1 (2542 aa).

Residue Met-1 is modified to N-acetylmethionine. Residues 1 to 10 (MLTDSGGGGT) show a composition bias toward gly residues. Disordered regions lie at residues 1–44 (MLTD…IRTV) and 50–69 (AGPA…SGTG). A compositionally biased stretch (low complexity) spans 20-29 (APRSAPAGAS). A compositionally biased stretch (gly residues) spans 57–69 (GSSGGGGSGSGTG). Residues Ser-101 and Ser-105 each carry the phosphoserine modification. ANK repeat units follow at residues 204 to 233 (VDTR…SVNE), 237 to 266 (EGES…NVED), 271 to 300 (GDIT…DVNS), 304 to 333 (TGNT…NIED), 337 to 366 (NGHT…GINT), 371 to 400 (FKES…DQEH), 404 to 433 (EMHT…QVNM), 437 to 466 (SFES…NLEE), 470 to 499 (EGYT…NINA), 504 to 533 (TQET…DIEL), 534 to 563 (GCST…NVHA), 567 to 596 (TGDT…DLEH), 600 to 629 (GGRT…NVNR), 634 to 663 (NDHT…DPTH), and 667 to 696 (DGST…NVLS). Residues 775–852 (LECIVEETEG…RQLQMKTQQQ (78 aa)) adopt a coiled-coil conformation. Residue Ser-803 is modified to Phosphoserine. ANK repeat units lie at residues 1054 to 1083 (NHDT…KIEH), 1087 to 1116 (KGFT…DIEA), 1121 to 1150 (TKDT…NKEH), 1154 to 1183 (SDYT…EINS), 1189 to 1218 (LGIS…DINA), 1223 to 1252 (NRNT…NVEH), 1256 to 1285 (TGLT…DVNA), 1291 to 1320 (SRDT…HIDV), 1324 to 1353 (KGNT…DVDA), and 1357 to 1386 (RKIT…QFPS). A coiled-coil region spans residues 1415 to 1485 (KAKDQQAAEA…ENKPKENSEL (71 aa)). Disordered regions lie at residues 1441 to 1517 (REES…TIGI), 1534 to 1614 (NVVT…SQEL), and 1632 to 1664 (SQEE…YKTV). The span at 1453-1463 (REKRKEKRKKK) shows a compositional bias: basic residues. A compositionally biased stretch (basic and acidic residues) spans 1464 to 1483 (KEEQKRKQEEDEENKPKENS). The span at 1484–1502 (ELPEDEDEEENDEDVEQEV) shows a compositional bias: acidic residues. The span at 1503-1517 (PIEPPSATTTTTIGI) shows a compositional bias: low complexity. Ser-1540 is modified (phosphoserine). At Thr-1553 the chain carries Phosphothreonine. The segment covering 1590-1603 (NSDSDNLDSTDCNS) has biased composition (low complexity). The segment covering 1604-1614 (ESSSGGKSQEL) has biased composition (polar residues). Ser-1632 bears the Phosphoserine mark. The span at 1638–1664 (STATSKTQTRLEGEVTPNSLSTSYKTV) shows a compositional bias: polar residues. At Thr-1653 the chain carries Phosphothreonine. Positions 1695–1759 (RRSKKLSVPA…ESTRYAVQLI (65 aa)) constitute a KH domain. Disordered regions lie at residues 1886–1923 (NTWG…VLPS), 1987–2106 (PSVS…APLT), and 2260–2367 (NMHP…IPPP). The span at 1898 to 1922 (PGNTNSSPKHNNTSRLPNQNGTVLP) shows a compositional bias: polar residues. Over residues 1987–1996 (PSVSSAPITS) the composition is skewed to low complexity. The span at 1997–2019 (GQAPTTFLPASTSQAQLSSQKME) shows a compositional bias: polar residues. Residues 2042-2077 (CTPSSTANSCSSSASNTPGAPETHPSSSPTPTSSNT) show a composition bias toward low complexity. The span at 2078–2106 (QEEAQPSSVSDLSPMSMPFASNSEPAPLT) shows a compositional bias: polar residues. 2 stretches are compositionally biased toward low complexity: residues 2285 to 2308 (LPSI…FSGI) and 2337 to 2349 (TSAS…APPT).

This sequence belongs to the mask family. As to quaternary structure, interacts with PTPN11. Isoform 2 interacts with HIV-1 VPR. Interacts with NOD2. Ubiquitous with high expression in cervix, spleen and brain. Expressed in hematopoietic cells with increased expression in leukemia cells. Isoform 2 is highly expressed in spleen with almost no expression in muscle and brain.

It is found in the cytoplasm. May play a role as a scaffolding protein that may be associated with the abnormal phenotype of leukemia cells. Isoform 2 may possess an antiapoptotic effect and protect cells during normal cell survival through its regulation of caspases. In Homo sapiens (Human), this protein is Ankyrin repeat and KH domain-containing protein 1 (ANKHD1).